The following is a 269-amino-acid chain: Ethylene-responsive transcription factor ERN1 (269 aa).

Polar residues predominate over residues M1 to K15. 2 disordered regions span residues M1–V36 and D128–G157. Residues K34–I91 constitute a DNA-binding region (AP2/ERF). The segment covering D128–S146 has biased composition (low complexity).

Belongs to the AP2/ERF transcription factor family. ERF subfamily.

It is found in the nucleus. Its function is as follows. Transcription factor involved in the symbiotic nodule signaling pathway in response to rhizobial stimulation. Functions as a transcriptional regulator required for root infection by symbiotic rhizobia, infection thread (IT) formation, and nodule development. May coordinate these processes. Functions downstream of the CCAMK-CYCLOPS complex. Probably not involved in arbuscular mycorrhizal (AM) symbiosis. This Lotus japonicus (Lotus corniculatus var. japonicus) protein is Ethylene-responsive transcription factor ERN1.